A 37-amino-acid chain; its full sequence is Large ribosomal subunit protein bL36 (37 aa).

Belongs to the bacterial ribosomal protein bL36 family.

The chain is Large ribosomal subunit protein bL36 from Mycoplasmopsis synoviae (strain 53) (Mycoplasma synoviae).